We begin with the raw amino-acid sequence, 482 residues long: MFS-type transporter traF (482 aa).

Residues 1–14 show a composition bias toward polar residues; that stretch reads MTSGTEQATLNTEE. Residues 1–22 form a disordered region; it reads MTSGTEQATLNTEENGSDSDHL. Asn15 and Asn45 each carry an N-linked (GlcNAc...) asparagine glycan. Transmembrane regions (helical) follow at residues 52–72, 89–109, 125–145, 149–169, 176–196, 209–229, 275–295, 312–332, and 354–374; these read VFIT…SSVM, LSIL…LLFG, VFLF…ATIF, FLCG…LADL, GIAV…GPLV, WTQW…FVFC, PILA…YLCF, IGSL…VIII, and LVPM…FAWT. Residue Asn376 is glycosylated (N-linked (GlcNAc...) asparagine). 3 helical membrane passes run 379–399, 427–447, and 448–468; these read LPWA…LLIF, LLGA…GVPW, and AMSL…LFFI.

This sequence belongs to the major facilitator superfamily. CAR1 family.

It is found in the membrane. Its function is as follows. MFS-type transporter; part of the tra gene cluster that produces terrestric acid. The clavatol biosynthesis cluster cla and the terrestric acid cluster tra are both involved in the production of peniphenones and penilactones. The chain is MFS-type transporter traF from Penicillium crustosum (Blue mold fungus).